A 492-amino-acid polypeptide reads, in one-letter code: Catalase-2 (492 aa).

Residues histidine 65 and asparagine 138 contribute to the active site. Tyrosine 348 is a heme binding site.

It belongs to the catalase family. As to quaternary structure, homotetramer and heterotetramer. At least six or seven isozymes are produced from a mixture of 3 gene products. Interacts with NCA1. Interacts with LSD1. It depends on heme as a cofactor.

It is found in the cytoplasm. It localises to the cytosol. Its subcellular location is the peroxisome matrix. It carries out the reaction 2 H2O2 = O2 + 2 H2O. In terms of biological role, catalyzes the degradation of hydrogen peroxide (H(2)O(2)) generated by peroxisomal oxidases to water and oxygen, thereby protecting cells from the toxic effects of hydrogen peroxide. This is Catalase-2 (CAT2) from Arabidopsis thaliana (Mouse-ear cress).